The primary structure comprises 137 residues: MEKTFAIIKPDAFAAGNAGKILARIYQEGFTVIGLKKLCMSQREAEGFYAVHNKKPFFAELTKFMSSGPCIVMVLEAEGCIGKWRDLMGATNPADAKPGSLRREFGTIVGENATHGSDAPETAAVELEYFFSGLELL.

Residues Lys9, Phe57, Arg85, Thr91, Arg102, and Asn112 each contribute to the ATP site. Catalysis depends on His115, which acts as the Pros-phosphohistidine intermediate.

Belongs to the NDK family. In terms of assembly, homotetramer. Requires Mg(2+) as cofactor.

Its subcellular location is the cytoplasm. The catalysed reaction is a 2'-deoxyribonucleoside 5'-diphosphate + ATP = a 2'-deoxyribonucleoside 5'-triphosphate + ADP. It carries out the reaction a ribonucleoside 5'-diphosphate + ATP = a ribonucleoside 5'-triphosphate + ADP. In terms of biological role, major role in the synthesis of nucleoside triphosphates other than ATP. The ATP gamma phosphate is transferred to the NDP beta phosphate via a ping-pong mechanism, using a phosphorylated active-site intermediate. This chain is Nucleoside diphosphate kinase, found in Desulfotalea psychrophila (strain LSv54 / DSM 12343).